The sequence spans 93 residues: Putative defensin-like protein 283 (93 aa).

The signal sequence occupies residues 1–24 (MTKIGFYLATYATIYIILSPGLLA). Disulfide bonds link Cys43–Cys83, Cys66–Cys90, and Cys72–Cys92.

Belongs to the DEFL family.

Its subcellular location is the secreted. The sequence is that of Putative defensin-like protein 283 from Arabidopsis thaliana (Mouse-ear cress).